A 374-amino-acid polypeptide reads, in one-letter code: MESSPVNCLPPDSLHQIFSSLPIRDIMICRSVCKFFNQLLTSQCFIEIISTRPPLNLLALRPPHHHHSHRHSGNGHATNIRPYIHVYDPEQNQWFRFNLDFLPFRSPQPVASSSGLIYLWGDSIDLAESSKSLVACNPLTRQFKVLPQLGSAWSRHGTVLVDSVNRVMVLTELAALYYSGTVVANQWLKFSSNLPSKPRSPVLMSSSVFALCDVGSPWRSQWKLFSCKLTNLTITHTNWVCLEKHEWGDIFDIIKRPRLLRGNGDSKLLMIGGLKSTFSLNPACSTILILRLDLESLEWEEAGRMPLEMYRGFQESSKFKVFGGGDRVYFSAKRMGKLAMWDCWQGWRWIEGVPGYADGLCRGFVFDAKLTLMP.

Positions Ser-3–Ile-48 constitute an F-box domain.

As to quaternary structure, part of a SCF (ASK-cullin-F-box) protein ligase complex. Interacts with SKP1A/ASK1, SKP1B/ASK2, ASK11 and ASK13.

It localises to the nucleus. It functions in the pathway protein modification; protein ubiquitination. Component of SCF(ASK-cullin-F-box) E3 ubiquitin ligase complexes, which may mediate the ubiquitination and subsequent proteasomal degradation of target proteins. The protein is SKP1-interacting partner 15 (SKIP15) of Arabidopsis thaliana (Mouse-ear cress).